The chain runs to 1297 residues: DNA-directed RNA polymerase subunit beta'' (1297 aa).

The Zn(2+) site is built by cysteine 220, cysteine 293, cysteine 300, and cysteine 303. Basic residues predominate over residues 1278-1288 (RRRKQNTKTRK). Positions 1278 to 1297 (RRRKQNTKTRKNNLFSLNEK) are disordered.

Belongs to the RNA polymerase beta' chain family. RpoC2 subfamily. In plastids the minimal PEP RNA polymerase catalytic core is composed of four subunits: alpha, beta, beta', and beta''. When a (nuclear-encoded) sigma factor is associated with the core the holoenzyme is formed, which can initiate transcription. Zn(2+) is required as a cofactor.

It localises to the plastid. It is found in the chloroplast. It carries out the reaction RNA(n) + a ribonucleoside 5'-triphosphate = RNA(n+1) + diphosphate. Its function is as follows. DNA-dependent RNA polymerase catalyzes the transcription of DNA into RNA using the four ribonucleoside triphosphates as substrates. This is DNA-directed RNA polymerase subunit beta'' from Welwitschia mirabilis (Tree tumbo).